A 209-amino-acid chain; its full sequence is MALLAEHLLKPLPADRQIETGPFLEAVAHLPPFFDCLGSPVFTPIKADISGNITKIKAVYDTDPAKFKTLQNILEVEKGMYGAEWPKVGATLALLWLKRGLRFIQVFLQSICDGERDENHPNLIRVNANKAYEMALKKYHGWLVQKIFKAALYAAPYKSDFLKALSKGQNVTEEECLEKIRLFLVNYTATIDAIYDMYTKMNAELDYTV.

An N-acetylalanine modification is found at Ala2. A run of 2 repeats spans residues 45–55 (IKADISGNITK) and 56–66 (IKAVYDTDPAK). The segment at 45 to 66 (IKADISGNITKIKAVYDTDPAK) is 2 X 12 AA approximate tandem repeats. 48–55 (DISGNITK) serves as a coordination point for beta-D-galactosyl-(1-&gt;4)-beta-D-glucosyl-(1&lt;-&gt;1)-N-[(9Z)-octadecenoyl]-sphing-4-enine. Residues His140 and Tyr207 each contribute to the beta-D-galactosyl-(1-&gt;4)-beta-D-glucosyl-(1&lt;-&gt;1)-N-[(9Z)-octadecenoyl]-sphing-4-enine site.

This sequence belongs to the GLTP family. As to quaternary structure, monomer.

It is found in the cytoplasm. Functionally, accelerates the intermembrane transfer of various glycolipids. Catalyzes the transfer of various glycosphingolipids between membranes but does not catalyze the transfer of phospholipids. May be involved in the intracellular translocation of glucosylceramides. This chain is Glycolipid transfer protein (Gltp), found in Mus musculus (Mouse).